A 1280-amino-acid chain; its full sequence is SET and MYND domain-containing protein DDB_G0284059 (1280 aa).

2 disordered regions span residues 1 to 35 (MTKKIKLSNSESNKVNNNNNNNHGNGHNHNHSHNH) and 111 to 167 (INKI…QKQQ). 2 stretches are compositionally biased toward low complexity: residues 16 to 25 (NNNNNNNHGN) and 117 to 153 (ENSPPSSPTLSSSTNTTTDRQELPQQQQQPQQQQSQP). TPR repeat units follow at residues 272-305 (SKGYKNKGNELFQKKQYSDALLLYNESLRIYDME) and 383-416 (HKLYYRRGICYYHLRKHYKAKKDFLRAHTLIEKR). Positions 439 to 468 (QKDEEIEQELDNKNNNSNDDEKQQQQQQQQ) form a coiled coil. Zn(2+) contacts are provided by cysteine 533, cysteine 536, cysteine 546, cysteine 549, cysteine 555, cysteine 559, histidine 568, and cysteine 572. The segment at 533–572 (CYNCFKEILSPIYCKECSNSQYCSNKCLNEDYVKQHGREC) adopts an MYND-type zinc-finger fold. 4 disordered regions span residues 601–642 (ANKG…QNLN), 659–726 (ALSS…TTTT), 854–905 (QQQQ…PFSP), and 1039–1079 (AKLQ…LNNN). Composition is skewed to low complexity over residues 659–697 (ALSSASTPTTATATTTTTTTTATTPTTLAETLSSTSLTE), 712–726 (SSSSSSSSSSSTTTT), 854–898 (QQQQ…QNPP), 1042–1053 (QQQQQQQQQHQQ), and 1061–1079 (NSNPTNLGSNNNNNYLNNN). In terms of domain architecture, SET spans 822 to 965 (CQLTTYTFAI…KGEEILGCYG (144 aa)). One copy of the TPR 3 repeat lies at 1218-1251 (GREYSKLGQIYLTLGEIEKSEDAIEKAESILMSW).

The protein belongs to the class V-like SAM-binding methyltransferase superfamily.

In terms of biological role, probable methyltransferase. This is SET and MYND domain-containing protein DDB_G0284059 from Dictyostelium discoideum (Social amoeba).